Here is a 64-residue protein sequence, read N- to C-terminus: Large ribosomal subunit protein bL35 (64 aa).

A disordered region spans residues 19–44; the sequence is TGKLKASRPGRRHKLTGKTPKRKRQL. Basic residues predominate over residues 23-44; the sequence is KASRPGRRHKLTGKTPKRKRQL.

Belongs to the bacterial ribosomal protein bL35 family.

This chain is Large ribosomal subunit protein bL35, found in Protochlamydia amoebophila (strain UWE25).